A 336-amino-acid chain; its full sequence is Holliday junction branch migration complex subunit RuvB (336 aa).

A large ATPase domain (RuvB-L) region spans residues 1–182; the sequence is MKERIVNLET…FGMSFRMQFY (182 aa). ATP contacts are provided by residues Leu-21, Arg-22, Gly-63, Lys-66, Thr-67, Ser-68, 129 to 131, Arg-172, Tyr-182, and Arg-219; that span reads EDF. A Mg(2+)-binding site is contributed by Thr-67. The small ATPAse domain (RuvB-S) stretch occupies residues 183-253; sequence SPSELALIIK…ITLHALNELG (71 aa). Positions 256 to 336 are head domain (RuvB-H); the sequence is ELGFDEADLA…IPTLNPQTLF (81 aa). DNA contacts are provided by Arg-310 and Arg-315.

This sequence belongs to the RuvB family. As to quaternary structure, homohexamer. Forms an RuvA(8)-RuvB(12)-Holliday junction (HJ) complex. HJ DNA is sandwiched between 2 RuvA tetramers; dsDNA enters through RuvA and exits via RuvB. An RuvB hexamer assembles on each DNA strand where it exits the tetramer. Each RuvB hexamer is contacted by two RuvA subunits (via domain III) on 2 adjacent RuvB subunits; this complex drives branch migration. In the full resolvosome a probable DNA-RuvA(4)-RuvB(12)-RuvC(2) complex forms which resolves the HJ.

The protein localises to the cytoplasm. The enzyme catalyses ATP + H2O = ADP + phosphate + H(+). The RuvA-RuvB-RuvC complex processes Holliday junction (HJ) DNA during genetic recombination and DNA repair, while the RuvA-RuvB complex plays an important role in the rescue of blocked DNA replication forks via replication fork reversal (RFR). RuvA specifically binds to HJ cruciform DNA, conferring on it an open structure. The RuvB hexamer acts as an ATP-dependent pump, pulling dsDNA into and through the RuvAB complex. RuvB forms 2 homohexamers on either side of HJ DNA bound by 1 or 2 RuvA tetramers; 4 subunits per hexamer contact DNA at a time. Coordinated motions by a converter formed by DNA-disengaged RuvB subunits stimulates ATP hydrolysis and nucleotide exchange. Immobilization of the converter enables RuvB to convert the ATP-contained energy into a lever motion, pulling 2 nucleotides of DNA out of the RuvA tetramer per ATP hydrolyzed, thus driving DNA branch migration. The RuvB motors rotate together with the DNA substrate, which together with the progressing nucleotide cycle form the mechanistic basis for DNA recombination by continuous HJ branch migration. Branch migration allows RuvC to scan DNA until it finds its consensus sequence, where it cleaves and resolves cruciform DNA. The chain is Holliday junction branch migration complex subunit RuvB from Helicobacter pylori (strain Shi470).